We begin with the raw amino-acid sequence, 201 residues long: 3-isopropylmalate dehydratase small subunit (201 aa).

Belongs to the LeuD family. LeuD type 1 subfamily. As to quaternary structure, heterodimer of LeuC and LeuD.

It catalyses the reaction (2R,3S)-3-isopropylmalate = (2S)-2-isopropylmalate. It participates in amino-acid biosynthesis; L-leucine biosynthesis; L-leucine from 3-methyl-2-oxobutanoate: step 2/4. Catalyzes the isomerization between 2-isopropylmalate and 3-isopropylmalate, via the formation of 2-isopropylmaleate. The chain is 3-isopropylmalate dehydratase small subunit from Salmonella arizonae (strain ATCC BAA-731 / CDC346-86 / RSK2980).